The sequence spans 86 residues: Acyl carrier protein (86 aa).

Positions 2–82 (ATVFERVKKV…AVVDYLKSKG (81 aa)) constitute a Carrier domain. Residue Ser-37 is modified to O-(pantetheine 4'-phosphoryl)serine.

The protein belongs to the acyl carrier protein (ACP) family. In terms of processing, 4'-phosphopantetheine is transferred from CoA to a specific serine of apo-ACP by AcpS. This modification is essential for activity because fatty acids are bound in thioester linkage to the sulfhydryl of the prosthetic group.

The protein localises to the cytoplasm. It participates in lipid metabolism; fatty acid biosynthesis. In terms of biological role, carrier of the growing fatty acid chain in fatty acid biosynthesis. The protein is Acyl carrier protein of Dehalococcoides mccartyi (strain ATCC BAA-2100 / JCM 16839 / KCTC 5957 / BAV1).